A 417-amino-acid chain; its full sequence is RH-like protein IIR (417 aa).

Helical transmembrane passes span 12-32 (CLPL…YFFT), 44-64 (LVAS…GFGF), 77-97 (VAFS…LDGF), 125-145 (ISVD…MVLV), 172-192 (IYVF…KPLP), 203-223 (TIPS…WPSF), 238-258 (VFNT…GSSL), 265-285 (ISMS…GTSC), 287-307 (LIPS…ISVG), 331-351 (NFSW…VRHT), and 358-378 (MIGF…TIAL).

Belongs to the ammonium transporter (TC 2.A.49) family. Rh subfamily.

It is found in the membrane. Functionally, may be part of an oligomeric complex which is likely to have a transport or channel function in the erythrocyte membrane. The protein is RH-like protein IIR of Pan troglodytes (Chimpanzee).